We begin with the raw amino-acid sequence, 260 residues long: Transcription factor SUM-1 (260 aa).

One can recognise a bHLH domain in the interval 112–163; sequence DKRKAATLRERRRLRKVNEAFEALKRHTCANPNQRLPKVEILRNAIEYIEKL. A disordered region spans residues 171–208; the sequence is KANGDSEMDSAETSSNTSDAMTDGSSPGSYSSDKAQQY. Polar residues predominate over residues 181 to 205; the sequence is AETSSNTSDAMTDGSSPGSYSSDKA.

As to quaternary structure, efficient DNA binding requires dimerization with another bHLH protein. Homodimer, and heterodimer with the ubiquitous bHLH protein E12.

The protein resides in the nucleus. Functionally, regulatory factor during embryogenesis. Conversion of pluripotent secondary mesenchyme cells to myogenic cells. It binds to the MCK enhancer element. This chain is Transcription factor SUM-1 (SUM-1), found in Lytechinus variegatus (Green sea urchin).